The primary structure comprises 131 residues: Large ribosomal subunit protein bL17 (131 aa).

This sequence belongs to the bacterial ribosomal protein bL17 family. Part of the 50S ribosomal subunit. Contacts protein L32.

This Burkholderia mallei (strain NCTC 10229) protein is Large ribosomal subunit protein bL17.